Consider the following 269-residue polypeptide: Formamidopyrimidine-DNA glycosylase (269 aa).

The active-site Schiff-base intermediate with DNA is proline 2. Glutamate 3 serves as the catalytic Proton donor. Lysine 57 functions as the Proton donor; for beta-elimination activity in the catalytic mechanism. 3 residues coordinate DNA: histidine 90, arginine 109, and lysine 150. The segment at 235–269 (QVYGRKGEPCRVCGTPIVATKHAQRATFYCRHCQK) adopts an FPG-type zinc-finger fold. The Proton donor; for delta-elimination activity role is filled by arginine 259.

It belongs to the FPG family. As to quaternary structure, monomer. The cofactor is Zn(2+).

It catalyses the reaction Hydrolysis of DNA containing ring-opened 7-methylguanine residues, releasing 2,6-diamino-4-hydroxy-5-(N-methyl)formamidopyrimidine.. The enzyme catalyses 2'-deoxyribonucleotide-(2'-deoxyribose 5'-phosphate)-2'-deoxyribonucleotide-DNA = a 3'-end 2'-deoxyribonucleotide-(2,3-dehydro-2,3-deoxyribose 5'-phosphate)-DNA + a 5'-end 5'-phospho-2'-deoxyribonucleoside-DNA + H(+). Its function is as follows. Involved in base excision repair of DNA damaged by oxidation or by mutagenic agents. Acts as a DNA glycosylase that recognizes and removes damaged bases. Has a preference for oxidized purines, such as 7,8-dihydro-8-oxoguanine (8-oxoG). Has AP (apurinic/apyrimidinic) lyase activity and introduces nicks in the DNA strand. Cleaves the DNA backbone by beta-delta elimination to generate a single-strand break at the site of the removed base with both 3'- and 5'-phosphates. The sequence is that of Formamidopyrimidine-DNA glycosylase from Salmonella dublin (strain CT_02021853).